Here is a 523-residue protein sequence, read N- to C-terminus: 2-hydroxyisoflavanone synthase (523 aa).

The chain crosses the membrane as a helical span at residues leucine 2–leucine 22. Cysteine 450 is a heme binding site.

This sequence belongs to the cytochrome P450 family. The cofactor is heme.

The protein localises to the microsome membrane. It catalyses the reaction (2S)-liquiritigenin + reduced [NADPH--hemoprotein reductase] + O2 = (2R,3S)-2,4',7-trihydroxyisoflavanone + oxidized [NADPH--hemoprotein reductase] + H2O + H(+). The catalysed reaction is (2S)-naringenin + reduced [NADPH--hemoprotein reductase] + O2 = 2-hydroxy-2,3-dihydrogenistein + oxidized [NADPH--hemoprotein reductase] + H2O + H(+). Its function is as follows. 2-hydroxyisoflavanone synthase, which catalyzes the hydroxylation associated with 1,2-aryl migration of flavanones. Converts liquiritigenin and naringenin into highly unstable precursors of the isoflavones daidzein and genistein. Acts only on substrates with (2S)-chirality. This is 2-hydroxyisoflavanone synthase (CYP93C2) from Glycyrrhiza echinata (Licorice).